A 254-amino-acid polypeptide reads, in one-letter code: UPF0246 protein FTF1693c (254 aa).

The protein belongs to the UPF0246 family.

The sequence is that of UPF0246 protein FTF1693c from Francisella tularensis subsp. tularensis (strain FSC 198).